A 384-amino-acid polypeptide reads, in one-letter code: S-adenosylmethionine synthase (384 aa).

Histidine 15 is an ATP binding site. Mg(2+) is bound at residue aspartate 17. Glutamate 43 provides a ligand contact to K(+). L-methionine contacts are provided by glutamate 56 and glutamine 99. The flexible loop stretch occupies residues 99 to 109 (QSPDINQGVDR). ATP contacts are provided by residues 164 to 166 (DAK), 230 to 231 (RF), aspartate 239, 245 to 246 (RK), alanine 262, and lysine 266. Residue aspartate 239 participates in L-methionine binding. Lysine 270 is an L-methionine binding site.

This sequence belongs to the AdoMet synthase family. Homotetramer; dimer of dimers. Mg(2+) serves as cofactor. K(+) is required as a cofactor.

It localises to the cytoplasm. The enzyme catalyses L-methionine + ATP + H2O = S-adenosyl-L-methionine + phosphate + diphosphate. It functions in the pathway amino-acid biosynthesis; S-adenosyl-L-methionine biosynthesis; S-adenosyl-L-methionine from L-methionine: step 1/1. Functionally, catalyzes the formation of S-adenosylmethionine (AdoMet) from methionine and ATP. The overall synthetic reaction is composed of two sequential steps, AdoMet formation and the subsequent tripolyphosphate hydrolysis which occurs prior to release of AdoMet from the enzyme. The polypeptide is S-adenosylmethionine synthase (Citrobacter koseri (strain ATCC BAA-895 / CDC 4225-83 / SGSC4696)).